Here is a 372-residue protein sequence, read N- to C-terminus: Glutamate 5-kinase (372 aa).

Position 14 (lysine 14) interacts with ATP. Substrate contacts are provided by serine 54, aspartate 141, and asparagine 153. 173–174 (TD) is a binding site for ATP. The PUA domain maps to 280–358 (RGRVVIDAGA…SEIESVLGHL (79 aa)).

It belongs to the glutamate 5-kinase family.

Its subcellular location is the cytoplasm. The enzyme catalyses L-glutamate + ATP = L-glutamyl 5-phosphate + ADP. Its pathway is amino-acid biosynthesis; L-proline biosynthesis; L-glutamate 5-semialdehyde from L-glutamate: step 1/2. Catalyzes the transfer of a phosphate group to glutamate to form L-glutamate 5-phosphate. This chain is Glutamate 5-kinase, found in Cupriavidus pinatubonensis (strain JMP 134 / LMG 1197) (Cupriavidus necator (strain JMP 134)).